Consider the following 167-residue polypeptide: Arginine repressor (167 aa).

It belongs to the ArgR family.

Its subcellular location is the cytoplasm. The protein operates within amino-acid biosynthesis; L-arginine biosynthesis [regulation]. Its function is as follows. Regulates arginine biosynthesis genes. This chain is Arginine repressor, found in Mycobacterium leprae (strain Br4923).